We begin with the raw amino-acid sequence, 352 residues long: Protein CIA1 (352 aa).

WD repeat units follow at residues 18–64 (GHTD…RSWT), 72–111 (THTR…FECI), 116–155 (GHEN…EYDC), 161–200 (GHTQ…GEYQ), 211–250 (GHSS…MQSG), 265–303 (YHDR…SVDG), and 315–352 (AHEN…ATKP).

Belongs to the WD repeat CIA1 family. As to quaternary structure, part of a complex composed of AE7, CIA1, MMS19 and NAR1. Interacts with AE7 and NAR1.

The protein resides in the nucleus. The protein localises to the cytoplasm. Essential component of the cytosolic iron-sulfur (Fe-S) protein assembly (CIA) machinery. Required for the maturation of extramitochondrial Fe/S proteins. This is Protein CIA1 from Arabidopsis thaliana (Mouse-ear cress).